The sequence spans 145 residues: uncharacterized protein (145 aa).

Residues 104 to 124 (IEVIILSHHFVIGFSFLLGLL) form a helical membrane-spanning segment.

The protein resides in the membrane. This is an uncharacterized protein from Saccharomyces cerevisiae (strain ATCC 204508 / S288c) (Baker's yeast).